Consider the following 414-residue polypeptide: Gamma-glutamyl phosphate reductase (414 aa).

It belongs to the gamma-glutamyl phosphate reductase family.

It localises to the cytoplasm. It carries out the reaction L-glutamate 5-semialdehyde + phosphate + NADP(+) = L-glutamyl 5-phosphate + NADPH + H(+). It participates in amino-acid biosynthesis; L-proline biosynthesis; L-glutamate 5-semialdehyde from L-glutamate: step 2/2. Its function is as follows. Catalyzes the NADPH-dependent reduction of L-glutamate 5-phosphate into L-glutamate 5-semialdehyde and phosphate. The product spontaneously undergoes cyclization to form 1-pyrroline-5-carboxylate. In Clostridium botulinum (strain Alaska E43 / Type E3), this protein is Gamma-glutamyl phosphate reductase.